The primary structure comprises 949 residues: MLSKLLRLGEGRMVKRLKKVADYVGTLSDDVEKLTDAELRAKTDEFKRRLADQKNPETLDDLLPEAFAVAREAAWRVLDQRPFDVQVMGAAALHLGNVAEMKTGEGKTLTCVLPAYLNALAGNGVHIVTVNDYLAKRDSEWMGRVHRFLGLQVGVILATMTPDERRVAYNADITYGTNNEFGFDYLRDNMAHSLDDLVQRGHHYAIVDEVDSILIDEARTPLIISGPADGASNWYTEFARLAPLMEKDVHYEVDLRKRTVGVHEKGVEFVEDQLGIDNLYEAANSPLVSYLNNALKAKELFSRDKDYIVRDGEVLIVDEFTGRVLIGRRYNEGMHQAIEAKEHVEIKAENQTLATITLQNYFRLYDKLAGMTGTAQTEAAELHEIYKLGVVSIPTNMPMIREDQSDLIYKTEEAKYIAVVDDVAERYAKGQPVLIGTTSVERSEYLSRQFTKRRIPHNVLNAKYHEQEATIIAVAGRRGGVTVATNMAGRGTDIVLGGNVDFLTDQRLRERGLDPVETPEEYEAAWHSELPIVKEEASKEAKEVIEAGGLYVLGTERHESRRIDNQLRGRSGRQGDPGESRFYLSLGDELMRRFNGAALETLLTRLNLPDDVPIEAKMVTRAIKSAQTQVEQQNFEVRKNVLKYDEVMNQQRKVIYAERRRILEGENLKDQALDMVRDVITAYVDGATGEGYAEDWDLDALWTALKTLYPVGITADSLTRKDHEFERDDLTREELLEALLKDAERAYAAREAELEEIAGEGAMRQLERNVLLNVIDRKWREHLYEMDYLKEGIGLRAMAQRDPLVEYQREGYDMFMAMLDGMKEESVGFLFNVTVEAVPAPPVAPAAEPAELAEFAAAAAAAAQQRSAVDGGARERAPSALRAKGVASESPALTYSGPAEDGSAQVQRNGGGAHKTPAGVPAGASRRERREAARRQGRGAKPPKSVKKR.

ATP contacts are provided by residues Gln86, 104–108 (GEGKT), and Asp493. Residues 869–949 (VDGGARERAP…AKPPKSVKKR (81 aa)) form a disordered region. The span at 925-934 (SRRERREAAR) shows a compositional bias: basic and acidic residues.

The protein belongs to the SecA family. In terms of assembly, monomer and homodimer. Part of the essential Sec protein translocation apparatus which comprises SecA, SecYEG and auxiliary proteins SecDF. Other proteins may also be involved.

The protein resides in the cell membrane. It localises to the cytoplasm. The catalysed reaction is ATP + H2O + cellular proteinSide 1 = ADP + phosphate + cellular proteinSide 2.. In terms of biological role, part of the Sec protein translocase complex. Interacts with the SecYEG preprotein conducting channel. Has a central role in coupling the hydrolysis of ATP to the transfer of proteins into and across the cell membrane, serving as an ATP-driven molecular motor driving the stepwise translocation of polypeptide chains across the membrane. The protein is Protein translocase subunit SecA 1 of Mycobacterium bovis (strain ATCC BAA-935 / AF2122/97).